A 219-amino-acid polypeptide reads, in one-letter code: Probable nicotinate-nucleotide adenylyltransferase (219 aa).

The protein belongs to the NadD family.

It catalyses the reaction nicotinate beta-D-ribonucleotide + ATP + H(+) = deamido-NAD(+) + diphosphate. The protein operates within cofactor biosynthesis; NAD(+) biosynthesis; deamido-NAD(+) from nicotinate D-ribonucleotide: step 1/1. In terms of biological role, catalyzes the reversible adenylation of nicotinate mononucleotide (NaMN) to nicotinic acid adenine dinucleotide (NaAD). This Pseudomonas putida (strain GB-1) protein is Probable nicotinate-nucleotide adenylyltransferase.